The following is a 216-amino-acid chain: Elongation factor Ts (216 aa).

An involved in Mg(2+) ion dislocation from EF-Tu region spans residues 81–84; it reads TDFV.

This sequence belongs to the EF-Ts family.

It localises to the cytoplasm. Its function is as follows. Associates with the EF-Tu.GDP complex and induces the exchange of GDP to GTP. It remains bound to the aminoacyl-tRNA.EF-Tu.GTP complex up to the GTP hydrolysis stage on the ribosome. In Geobacter sp. (strain M21), this protein is Elongation factor Ts.